Here is a 442-residue protein sequence, read N- to C-terminus: D-serine dehydratase (442 aa).

N6-(pyridoxal phosphate)lysine is present on lysine 118.

It belongs to the serine/threonine dehydratase family. DsdA subfamily. Monomer. It depends on pyridoxal 5'-phosphate as a cofactor.

The enzyme catalyses D-serine = pyruvate + NH4(+). The protein is D-serine dehydratase of Escherichia fergusonii (strain ATCC 35469 / DSM 13698 / CCUG 18766 / IAM 14443 / JCM 21226 / LMG 7866 / NBRC 102419 / NCTC 12128 / CDC 0568-73).